A 1170-amino-acid chain; its full sequence is Putative DNA topoisomerase 2, mitochondrial (1170 aa).

ATP is bound by residues Asn106, Asn135, 163–165 (SSN), 176–183 (GRNGYGAK), and 396–398 (QTK). Residues 475–590 (CTLILTEGDS…SLVHTDGFIQ (116 aa)) enclose the Toprim domain. Mg(2+)-binding residues include Glu481, Asp559, and Asp561. In terms of domain architecture, Topo IIA-type catalytic spans 722–1157 (IPSLIDGLKP…DWKSVWRSEL (436 aa)). Tyr813 serves as the catalytic O-(5'-phospho-DNA)-tyrosine intermediate.

The protein belongs to the type II topoisomerase family. In terms of assembly, homodimer. Mg(2+) serves as cofactor. The cofactor is Mn(2+). Ca(2+) is required as a cofactor.

The protein localises to the mitochondrion. The enzyme catalyses ATP-dependent breakage, passage and rejoining of double-stranded DNA.. Control of topological states of DNA by transient breakage and subsequent rejoining of DNA strands. Topoisomerase II makes double-strand breaks. The sequence is that of Putative DNA topoisomerase 2, mitochondrial from Caenorhabditis elegans.